A 357-amino-acid chain; its full sequence is Inner membrane protein YcfT (357 aa).

Residues 1–12 lie on the Cytoplasmic side of the membrane; the sequence is MKQKELWINQIK. The helical transmembrane segment at 13 to 33 threads the bilayer; that stretch reads GLCICLVVIYHSVITFYPHLT. Topologically, residues 34–49 are periplasmic; the sequence is TFQHPLSEVLSKCWIY. Residues 50 to 70 traverse the membrane as a helical segment; it reads FNLYLAPFRMPVFFFISGYLI. Residues 71–86 are Cytoplasmic-facing; it reads RRYIDSVPWGNCLDKR. A helical transmembrane segment spans residues 87-107; the sequence is IWNIFWVLALWGVVQWLALSA. Over 108 to 135 the chain is Periplasmic; the sequence is LNQWLAPERDLSNASNAAYADSTGEFLH. Residues 136–156 form a helical membrane-spanning segment; it reads GMITASTSLWYLYALIVYFVV. Topologically, residues 157-162 are cytoplasmic; the sequence is CKIFSR. A helical membrane pass occupies residues 163–183; the sequence is LALPLFALFVLLSVAVNFVPT. Residues 184–196 lie on the Periplasmic side of the membrane; that stretch reads PWWGMNSVIRNLP. A helical membrane pass occupies residues 197-217; the sequence is YYSLGAWFGATIMTCVKEVPL. Topologically, residues 218-231 are cytoplasmic; that stretch reads RRHLLMASLLTVLA. The helical transmembrane segment at 232-252 threads the bilayer; sequence VGAWLFTISLLLSLVSIVVIM. At 253 to 310 the chain is on the periplasmic side; it reads KLFYQYEQRFGMRSTSLLNVIGSNTIAIYTTHRILVEIFSLTLLAQMNAARWSPQVEL. Residues 311-331 form a helical membrane-spanning segment; the sequence is TLLLVYPFVSLFICTVAGLLV. The Cytoplasmic segment spans residues 332–357; it reads RKLSQRAFSDLLFSPPSLPAAVSYSR.

This sequence belongs to the acyltransferase 3 family.

The protein resides in the cell inner membrane. The chain is Inner membrane protein YcfT (ycfT) from Escherichia coli (strain K12).